The sequence spans 852 residues: Phenylalanine--tRNA ligase beta subunit (852 aa).

Residues 44–159 form the tRNA-binding domain; that stretch reads PETTGPLVIG…DADLASANLK (116 aa). The B5 domain maps to 428–510; the sequence is PEMPMITIHT…RLEGLEDIPS (83 aa). Residues aspartate 488, aspartate 494, glutamate 497, and glutamate 498 each contribute to the Mg(2+) site. Residues 758-851 enclose the FDX-ACB domain; that stretch reads SAFPAVLQDI…ATEKVGAQLR (94 aa).

Belongs to the phenylalanyl-tRNA synthetase beta subunit family. Type 1 subfamily. In terms of assembly, tetramer of two alpha and two beta subunits. Requires Mg(2+) as cofactor.

The protein localises to the cytoplasm. The enzyme catalyses tRNA(Phe) + L-phenylalanine + ATP = L-phenylalanyl-tRNA(Phe) + AMP + diphosphate + H(+). The chain is Phenylalanine--tRNA ligase beta subunit from Corynebacterium jeikeium (strain K411).